The sequence spans 761 residues: MRYNQLSYIPTSLETAVAELQALGFAVQQEQAPKESFAIFLRKLFFHFQDTDYPLSHMIATKELDLLSFLASDEALTKEVFDLVALQVLGFIPAVDFTDTQDFIQKIGFPIVFDSQQLLLNLHQLLATRQKSGVTLIDSLVSQGLLPMDNCYHYFNGKALATFDTTSLIREVVYVEAPLDTDQDGQLDLIKVNIIRPKASTAIPSMMTASPYHQGINETANDKKLHRMEGELSPKAPRRITVEPTDFQPLATKPSRLPVNECQETFSHISSYTLNDYFLARGFANLYVSGVGTAGSTGFMTSGDYAQIESFKAVIDWLNGRATAYTSHKRDYQIKADWSNGLVATTGKSYLGTMSTGLATTGVDGLAVIIAEAAISSWYDYYRENGLVCSPGGYPGEDLDVLTELTYSRNLLPGDYLRHNDHYQELLSQQSQALDRQSGDYNQFWHDRNYLPQADRIKCEVVYTHGLQDWNVKPRQVYNIFNALPDSLGKHLFLHHGEHVYMHNWQSIDFREAMNALLCQKMLGQNNGFTLPTIIWQDNQKEQTWKELTAFGGHSKRQIALGEDHVLIDNHYGEEDFKRYGKDFRAFKAELFEGKANQAVIDILLEEDLPINGQACLKLKLKSSENKGILSAQLLDYGKKKRFGDLPAILELDSIDNGQQFAREALKELPFKDSPYRVVTKGVLNLQHRSGLLTIEDIPNDQWISITFHLQPTIYHMAKGDTLRVVLYTTDFEHTIRDNSNYALTLDLEQSYLLIPTDEEE.

Active-site charge relay system residues include S349, D469, and H499.

This sequence belongs to the peptidase S15 family. In terms of assembly, homodimer.

It is found in the cytoplasm. The enzyme catalyses Hydrolyzes Xaa-Pro-|- bonds to release unblocked, N-terminal dipeptides from substrates including Ala-Pro-|-p-nitroanilide and (sequentially) Tyr-Pro-|-Phe-Pro-|-Gly-Pro-|-Ile.. Its function is as follows. Removes N-terminal dipeptides sequentially from polypeptides having unsubstituted N-termini provided that the penultimate residue is proline. This is Xaa-Pro dipeptidyl-peptidase from Streptococcus equi subsp. zooepidemicus (strain H70).